Reading from the N-terminus, the 194-residue chain is Phosphoheptose isomerase (194 aa).

An SIS domain is found at 37 to 194 (ISDSFKQGGK…LIEFEMAKDV (158 aa)). Residue 52 to 54 (NGG) participates in substrate binding. Histidine 61 and glutamate 65 together coordinate Zn(2+). Substrate is bound by residues glutamate 65, 93 to 94 (ND), 119 to 121 (STS), serine 124, and glutamine 172. Zn(2+)-binding residues include glutamine 172 and histidine 180.

It belongs to the SIS family. GmhA subfamily. As to quaternary structure, homotetramer. Zn(2+) serves as cofactor.

It localises to the cytoplasm. The enzyme catalyses 2 D-sedoheptulose 7-phosphate = D-glycero-alpha-D-manno-heptose 7-phosphate + D-glycero-beta-D-manno-heptose 7-phosphate. The protein operates within carbohydrate biosynthesis; D-glycero-D-manno-heptose 7-phosphate biosynthesis; D-glycero-alpha-D-manno-heptose 7-phosphate and D-glycero-beta-D-manno-heptose 7-phosphate from sedoheptulose 7-phosphate: step 1/1. Catalyzes the isomerization of sedoheptulose 7-phosphate in D-glycero-D-manno-heptose 7-phosphate. In Actinobacillus succinogenes (strain ATCC 55618 / DSM 22257 / CCUG 43843 / 130Z), this protein is Phosphoheptose isomerase.